The primary structure comprises 337 residues: uncharacterized protein (337 aa).

An F-box domain is found at 12 to 60 (SLNYVDLPDTVHRKIFEYLNPWEIFKLSRISKAIHVTILKNKKFAVKDI).

This is an uncharacterized protein from Caenorhabditis elegans.